The primary structure comprises 125 residues: Large ribosomal subunit protein uL22 (125 aa).

This sequence belongs to the universal ribosomal protein uL22 family. Part of the 50S ribosomal subunit.

This protein binds specifically to 23S rRNA; its binding is stimulated by other ribosomal proteins, e.g. L4, L17, and L20. It is important during the early stages of 50S assembly. It makes multiple contacts with different domains of the 23S rRNA in the assembled 50S subunit and ribosome. Functionally, the globular domain of the protein is located near the polypeptide exit tunnel on the outside of the subunit, while an extended beta-hairpin is found that lines the wall of the exit tunnel in the center of the 70S ribosome. The polypeptide is Large ribosomal subunit protein uL22 (Novosphingobium aromaticivorans (strain ATCC 700278 / DSM 12444 / CCUG 56034 / CIP 105152 / NBRC 16084 / F199)).